The chain runs to 642 residues: ATP-dependent zinc metalloprotease FtsH (642 aa).

At Met-1–Lys-6 the chain is on the cytoplasmic side. The helical transmembrane segment at Asn-7–Gly-27 threads the bilayer. At Gln-28–Trp-101 the chain is on the extracellular side. The helical transmembrane segment at Trp-102–Ile-122 threads the bilayer. Residues Met-123 to Lys-642 lie on the Cytoplasmic side of the membrane. ATP is bound at residue Gly-194–Thr-201. His-416 contributes to the Zn(2+) binding site. The active site involves Glu-417. 2 residues coordinate Zn(2+): His-420 and Asp-492. Positions Thr-597–Ser-610 are enriched in basic and acidic residues. A disordered region spans residues Thr-597 to Lys-642. Over residues Thr-626–Lys-642 the composition is skewed to polar residues.

The protein in the central section; belongs to the AAA ATPase family. It in the C-terminal section; belongs to the peptidase M41 family. In terms of assembly, homohexamer. Requires Zn(2+) as cofactor.

Its subcellular location is the cell membrane. Its function is as follows. Acts as a processive, ATP-dependent zinc metallopeptidase for both cytoplasmic and membrane proteins. Plays a role in the quality control of integral membrane proteins. The chain is ATP-dependent zinc metalloprotease FtsH from Veillonella parvula (strain ATCC 10790 / DSM 2008 / CCUG 5123 / JCM 12972 / NCTC 11810 / Te3) (Veillonella alcalescens).